We begin with the raw amino-acid sequence, 210 residues long: Proline-rich protein 20G (210 aa).

Positions methionine 1 to arginine 11 are enriched in basic residues. The segment at methionine 1–arginine 82 is disordered. Over residues glycine 69–arginine 82 the composition is skewed to gly residues.

The protein belongs to the PRR20 family.

The chain is Proline-rich protein 20G from Homo sapiens (Human).